The sequence spans 283 residues: Non-selective voltage-gated ion channel VDAC3 (283 aa).

An N-acetylcysteine modification is found at C2. T4 is modified (phosphothreonine). An N6-acetyllysine mark is found at K12, K15, and K20. Beta stranded transmembrane passes span 26 to 35 (MVKIDLKTKS) and 39 to 47 (VEFSTSGHA). T33 carries the phosphothreonine modification. K53 is covalently cross-linked (Glycyl lysine isopeptide (Lys-Gly) (interchain with G-Cter in ubiquitin)). The next 3 membrane-spanning stretches (beta stranded) occupy residues 54 to 64 (ASGNLETKYKV), 69 to 76 (LIFTQKWN), and 80 to 89 (TLGTEISWEN). K90 bears the N6-acetyllysine mark. Residues 95–104 (LKLTVDTIFV) traverse the membrane as a beta stranded segment. Residues K109 and K110 each participate in a glycyl lysine isopeptide (Lys-Gly) (interchain with G-Cter in ubiquitin) cross-link. 10 beta stranded membrane-spanning segments follow: residues 111–120 (SGKLKASYRR), 123–130 (FSVGSKVD), 137–145 (TIYGWAVLA), 150–158 (LAGYQMSFD), 163–175 (KLCQ…GYKA), 178–185 (FQLHTHVN), 189–198 (EFGGSIYQRV), 202–211 (IETSINLAWT), 218–227 (RFGIAAKYRL), and 231–238 (TSLSAKVN). S241 carries the post-translational modification Phosphoserine. Residues 242-244 (LIG) and 260-264 (SALVD) each bind NAD(+). 2 beta stranded membrane passes run 242 to 251 (LIGLGYTQSL) and 254 to 263 (GVKLTLSALV). The residue at position 266 (K266) is an N6-acetyllysine; alternate. K266 is covalently cross-linked (Glycyl lysine isopeptide (Lys-Gly) (interchain with G-Cter in ubiquitin); alternate). A beta stranded transmembrane segment spans residues 273–282 (HKVGLGFELE).

Belongs to the eukaryotic mitochondrial porin family. Interacts with ARMC12 in a TBC1D21-dependent manner. Interacts with MISFA. Post-translationally, ubiquitinated by PRKN during mitophagy, leading to its degradation and enhancement of mitophagy. Deubiquitinated by USP30. As to expression, isoform 1 is widely expressed with strong expression in atrium and ascitic tumor, lower levels in brain and very low levels in liver and kidney. Isoform 2 is also widely expressed with highest levels in brain but no expression in kidney. Also expressed in flagella of epididymal sperm.

Its subcellular location is the mitochondrion outer membrane. The protein localises to the membrane. The catalysed reaction is chloride(in) = chloride(out). It carries out the reaction K(+)(in) = K(+)(out). Its function is as follows. Non-selective voltage-gated ion channel that mediates the transport of anions and cations through the mitochondrion outer membrane and plasma membrane. Forms a high-conducting channel with a stable open state and a voltage-induced closure with a mild preference for anions over cations. Involved in male fertility and sperm mitochondrial sheath formation. The sequence is that of Non-selective voltage-gated ion channel VDAC3 from Rattus norvegicus (Rat).